The primary structure comprises 426 residues: Formate-dependent phosphoribosylglycinamide formyltransferase (426 aa).

Residues 26–27 (EL) and Glu-86 contribute to the N(1)-(5-phospho-beta-D-ribosyl)glycinamide site. ATP contacts are provided by residues Arg-118, Lys-158, 197–200 (EEFI), and Glu-205. In terms of domain architecture, ATP-grasp spans 123–324 (EAIASTGART…EFALHAKAVL (202 aa)). Residues Glu-279 and Glu-293 each contribute to the Mg(2+) site. Residues Asp-300, Lys-374, and 381-382 (RR) contribute to the N(1)-(5-phospho-beta-D-ribosyl)glycinamide site.

This sequence belongs to the PurK/PurT family. As to quaternary structure, homodimer.

It catalyses the reaction N(1)-(5-phospho-beta-D-ribosyl)glycinamide + formate + ATP = N(2)-formyl-N(1)-(5-phospho-beta-D-ribosyl)glycinamide + ADP + phosphate + H(+). The protein operates within purine metabolism; IMP biosynthesis via de novo pathway; N(2)-formyl-N(1)-(5-phospho-D-ribosyl)glycinamide from N(1)-(5-phospho-D-ribosyl)glycinamide (formate route): step 1/1. Its function is as follows. Involved in the de novo purine biosynthesis. Catalyzes the transfer of formate to 5-phospho-ribosyl-glycinamide (GAR), producing 5-phospho-ribosyl-N-formylglycinamide (FGAR). Formate is provided by PurU via hydrolysis of 10-formyl-tetrahydrofolate. The sequence is that of Formate-dependent phosphoribosylglycinamide formyltransferase from Methanocella arvoryzae (strain DSM 22066 / NBRC 105507 / MRE50).